Consider the following 715-residue polypeptide: Scinderin (715 aa).

The tract at residues 1–363 (MAQGLYHEEF…DGFGKVYVTE (363 aa)) is actin-severing. Residues 27–77 (LELVPVPESAYGNFYVGDAYLVLHTTQASRGFTYRLHFWLGKECTQDESTA) form a Gelsolin-like 1 repeat. Tyrosine 102 bears the Phosphotyrosine mark. Residues 112 to 119 (KGGLKYKA) and 138 to 146 (RLLHVKGRR) each bind a 1,2-diacyl-sn-glycero-3-phospho-(1D-myo-inositol-4,5-bisphosphate). Gelsolin-like repeat units follow at residues 148–188 (VRAT…YERL), 265–307 (LVAE…QERK), 398–451 (VQIW…DELT), and 523–564 (TRIM…EEEK). Positions 364–715 (KVAHVKQIPF…WFLGWDSSRW (352 aa)) are actin-binding, Ca-sensitive. Positions 364–715 (KVAHVKQIPF…WFLGWDSSRW (352 aa)) are ca(2+)-dependent actin binding. 3 residues coordinate Ca(2+): asparagine 538, aspartate 539, and glutamate 562. Tyrosine 599 bears the Phosphotyrosine mark. The Gelsolin-like 6 repeat unit spans residues 626-668 (FIIEEVPGEFTQDDLAEDDVMLLDAWEQIFIWIGKDANEVEKS). The Ca(2+) site is built by aspartate 643, aspartate 644, and glutamate 666.

This sequence belongs to the villin/gelsolin family. Post-translationally, the N-terminus is blocked. In the adrenal gland, expressed in the medulla but, in the cortex, found only in diffuse parts.

Its subcellular location is the cytoplasm. The protein localises to the cytoskeleton. It is found in the cell projection. It localises to the podosome. Ca(2+)-dependent actin filament-severing protein that has a regulatory function in exocytosis by affecting the organization of the microfilament network underneath the plasma membrane. In vitro, also has barbed end capping and nucleating activities in the presence of Ca(2+). Severing activity is inhibited by phosphatidylinositol 4,5-bis-phosphate (PIP2). Required for megakaryocyte differentiation, maturation, polyploidization and apoptosis with the release of platelet-like particles. Plays a role in osteoclastogenesis (OCG) and actin cytoskeletal organization in osteoclasts. Regulates chondrocyte proliferation and differentiation. Inhibits cell proliferation and tumorigenesis. Signaling is mediated by MAPK, p38 and JNK pathways. This Bos taurus (Bovine) protein is Scinderin.